Reading from the N-terminus, the 319-residue chain is L-threo-3-hydroxyaspartate ammonia-lyase (319 aa).

The residue at position 53 (lysine 53) is an N6-(pyridoxal phosphate)lysine. Residues asparagine 80, 179–183 (GGGGM), and threonine 304 contribute to the pyridoxal 5'-phosphate site.

The protein belongs to the serine/threonine dehydratase family. May be either a monomer or a homodimer. Pyridoxal 5'-phosphate serves as cofactor. Requires Mn(2+) as cofactor. The cofactor is Mg(2+). Ca(2+) is required as a cofactor.

The catalysed reaction is (3S)-3-hydroxy-L-aspartate = oxaloacetate + NH4(+). Its activity is regulated as follows. Is strongly inhibited by hydroxylamine and EDTA in vitro. In terms of biological role, catalyzes the deamination of L-threo-3-hydroxyaspartate to oxaloacetate and ammonia. Shows a high specificity towards L-threo-3-hydroxyaspartate as other 3-hydroxyaminoacids, i.e. D,L-erythro- and D-threo-3-hydroxyaspartate, D-threonine, L-threonine, D,L-allothreonine, D,L-threo-3-phenylserine, D-serine, and L-serine, are not substrates for this enzyme. Exhibits no detectable serine and aspartate racemase activity. Might play a role in the detoxification of naturally occurring 3-hydroxyaspartate in Pseudomonas sp. T62 cells. The protein is L-threo-3-hydroxyaspartate ammonia-lyase of Pseudomonas sp.